The following is an 813-amino-acid chain: Lon protease (813 aa).

The Lon N-terminal domain occupies 30–225; it reads LPILPVRNIV…WLLQLMDKDI (196 aa). 376–383 serves as a coordination point for ATP; sequence GPPGVGKT. In terms of domain architecture, Lon proteolytic spans 612-793; it reads DDLAGIVTGL…DEVLAIALLK (182 aa). Catalysis depends on residues S699 and K742.

The protein belongs to the peptidase S16 family. Homohexamer. Organized in a ring with a central cavity.

It localises to the cytoplasm. The enzyme catalyses Hydrolysis of proteins in presence of ATP.. Functionally, ATP-dependent serine protease that mediates the selective degradation of mutant and abnormal proteins as well as certain short-lived regulatory proteins. Required for cellular homeostasis and for survival from DNA damage and developmental changes induced by stress. Degrades polypeptides processively to yield small peptide fragments that are 5 to 10 amino acids long. Binds to DNA in a double-stranded, site-specific manner. The chain is Lon protease from Cytophaga hutchinsonii (strain ATCC 33406 / DSM 1761 / CIP 103989 / NBRC 15051 / NCIMB 9469 / D465).